Consider the following 172-residue polypeptide: Shikimate kinase (172 aa).

An ATP-binding site is contributed by 8–15 (GARASGKT).

This sequence belongs to the shikimate kinase family.

It localises to the cytoplasm. It carries out the reaction shikimate + ATP = 3-phosphoshikimate + ADP + H(+). It participates in metabolic intermediate biosynthesis; chorismate biosynthesis; chorismate from D-erythrose 4-phosphate and phosphoenolpyruvate: step 5/7. The sequence is that of Shikimate kinase from Oleidesulfovibrio alaskensis (strain ATCC BAA-1058 / DSM 17464 / G20) (Desulfovibrio alaskensis).